Here is a 107-residue protein sequence, read N- to C-terminus: uncharacterized protein (107 aa).

Disordered regions lie at residues 51–75 (VQRS…TQSA) and 88–107 (NPTP…APEP). Over residues 63-75 (NGNQGSAIPTQSA) the composition is skewed to polar residues.

This is an uncharacterized protein from Fowl adenovirus A serotype 1 (strain CELO / Phelps) (FAdV-1).